The sequence spans 428 residues: tRNA(Ile)-lysidine synthase (428 aa).

28–33 is an ATP binding site; the sequence is SGGVDS.

The protein belongs to the tRNA(Ile)-lysidine synthase family.

It is found in the cytoplasm. It catalyses the reaction cytidine(34) in tRNA(Ile2) + L-lysine + ATP = lysidine(34) in tRNA(Ile2) + AMP + diphosphate + H(+). Functionally, ligates lysine onto the cytidine present at position 34 of the AUA codon-specific tRNA(Ile) that contains the anticodon CAU, in an ATP-dependent manner. Cytidine is converted to lysidine, thus changing the amino acid specificity of the tRNA from methionine to isoleucine. This Streptococcus pyogenes serotype M6 (strain ATCC BAA-946 / MGAS10394) protein is tRNA(Ile)-lysidine synthase.